A 256-amino-acid chain; its full sequence is Hydroxyethylthiazole kinase (256 aa).

Methionine 37 contacts substrate. Lysine 113 and threonine 159 together coordinate ATP. Glycine 186 is a binding site for substrate.

Belongs to the Thz kinase family. Requires Mg(2+) as cofactor.

It carries out the reaction 5-(2-hydroxyethyl)-4-methylthiazole + ATP = 4-methyl-5-(2-phosphooxyethyl)-thiazole + ADP + H(+). The protein operates within cofactor biosynthesis; thiamine diphosphate biosynthesis; 4-methyl-5-(2-phosphoethyl)-thiazole from 5-(2-hydroxyethyl)-4-methylthiazole: step 1/1. In terms of biological role, catalyzes the phosphorylation of the hydroxyl group of 4-methyl-5-beta-hydroxyethylthiazole (THZ). The sequence is that of Hydroxyethylthiazole kinase from Exiguobacterium sibiricum (strain DSM 17290 / CCUG 55495 / CIP 109462 / JCM 13490 / 255-15).